Here is a 409-residue protein sequence, read N- to C-terminus: Peptidase T (409 aa).

His-80 contacts Zn(2+). Asp-82 is an active-site residue. Residue Asp-143 participates in Zn(2+) binding. The active-site Proton acceptor is Glu-177. Residues Glu-178, Asp-200, and His-382 each coordinate Zn(2+).

The protein belongs to the peptidase M20B family. The cofactor is Zn(2+).

The protein resides in the cytoplasm. The catalysed reaction is Release of the N-terminal residue from a tripeptide.. Its function is as follows. Cleaves the N-terminal amino acid of tripeptides. The protein is Peptidase T of Enterococcus faecalis (strain ATCC 700802 / V583).